Reading from the N-terminus, the 110-residue chain is Small ribosomal subunit protein eS25 (110 aa).

Residues 1 to 37 (MGGASKKPISTMEKRLKKEAEKQQKAEEKKKGPSKTG) are disordered. Basic and acidic residues predominate over residues 12–37 (MEKRLKKEAEKQQKAEEKKKGPSKTG).

Belongs to the eukaryotic ribosomal protein eS25 family.

In Saccharolobus solfataricus (strain ATCC 35092 / DSM 1617 / JCM 11322 / P2) (Sulfolobus solfataricus), this protein is Small ribosomal subunit protein eS25 (rps25e).